A 178-amino-acid polypeptide reads, in one-letter code: uncharacterized protein (178 aa).

In terms of biological role, this protein is non-essential for virus function. This is an uncharacterized protein from Sulfolobus spindle-shape virus 1 (SSV1).